The following is a 299-amino-acid chain: ATP phosphoribosyltransferase (299 aa).

This sequence belongs to the ATP phosphoribosyltransferase family. Long subfamily. Mg(2+) is required as a cofactor.

The protein resides in the cytoplasm. It carries out the reaction 1-(5-phospho-beta-D-ribosyl)-ATP + diphosphate = 5-phospho-alpha-D-ribose 1-diphosphate + ATP. It participates in amino-acid biosynthesis; L-histidine biosynthesis; L-histidine from 5-phospho-alpha-D-ribose 1-diphosphate: step 1/9. Its activity is regulated as follows. Feedback inhibited by histidine. Its function is as follows. Catalyzes the condensation of ATP and 5-phosphoribose 1-diphosphate to form N'-(5'-phosphoribosyl)-ATP (PR-ATP). Has a crucial role in the pathway because the rate of histidine biosynthesis seems to be controlled primarily by regulation of HisG enzymatic activity. The chain is ATP phosphoribosyltransferase from Shewanella sp. (strain ANA-3).